The chain runs to 91 residues: Small ribosomal subunit protein uS17 (91 aa).

This sequence belongs to the universal ribosomal protein uS17 family. As to quaternary structure, part of the 30S ribosomal subunit.

One of the primary rRNA binding proteins, it binds specifically to the 5'-end of 16S ribosomal RNA. The chain is Small ribosomal subunit protein uS17 from Saccharopolyspora erythraea (strain ATCC 11635 / DSM 40517 / JCM 4748 / NBRC 13426 / NCIMB 8594 / NRRL 2338).